The primary structure comprises 59 residues: uncharacterized protein (59 aa).

A helical membrane pass occupies residues 7-27 (LLLLVAIALISAFALTVTGVV).

It is found in the membrane. This is an uncharacterized protein from Pyrobaculum aerophilum (strain ATCC 51768 / DSM 7523 / JCM 9630 / CIP 104966 / NBRC 100827 / IM2).